A 199-amino-acid chain; its full sequence is Insertion sequence IS21-like putative ATP-binding protein (199 aa).

114–121 (GDSGTGKT) serves as a coordination point for ATP.

Belongs to the IS21/IS1162 putative ATP-binding protein family.

The chain is Insertion sequence IS21-like putative ATP-binding protein (tnpB) from Bacteroides fragilis (strain YCH46).